The primary structure comprises 188 residues: Phosphoribosylglycinamide formyltransferase (188 aa).

N(1)-(5-phospho-beta-D-ribosyl)glycinamide is bound at residue 12–14 (GSN). (6R)-10-formyltetrahydrofolate-binding positions include lysine 66, 91–94 (MRLI), and asparagine 108. Histidine 110 acts as the Proton donor in catalysis.

It belongs to the GART family.

The catalysed reaction is N(1)-(5-phospho-beta-D-ribosyl)glycinamide + (6R)-10-formyltetrahydrofolate = N(2)-formyl-N(1)-(5-phospho-beta-D-ribosyl)glycinamide + (6S)-5,6,7,8-tetrahydrofolate + H(+). It functions in the pathway purine metabolism; IMP biosynthesis via de novo pathway; N(2)-formyl-N(1)-(5-phospho-D-ribosyl)glycinamide from N(1)-(5-phospho-D-ribosyl)glycinamide (10-formyl THF route): step 1/1. Catalyzes the transfer of a formyl group from 10-formyltetrahydrofolate to 5-phospho-ribosyl-glycinamide (GAR), producing 5-phospho-ribosyl-N-formylglycinamide (FGAR) and tetrahydrofolate. This is Phosphoribosylglycinamide formyltransferase from Staphylococcus aureus (strain COL).